Consider the following 546-residue polypeptide: MWRRTYLLLLLIRAYFALSPSYIHPDEHFQGLEVFAGRILSYPSRLPWEFTSERPIRSVFPLYPIYGVPISLLKWFYTETGTESPPAELVYYVVRGVMFLLSFVLEDWAVHDLVPLPRHRRVALVLVASSYVTWTHQTHTFSNSLETLLVAWGLVLINRIIDNKRRSSLFSCAILSFICVAGIFNRITFPAFLVLSLGLVVYNFPRRPLSFFSLVGFGLVFFCIAVFADTTFYKPSASFADVLRSPVITPLNNLLYNTDNSNLALHGLHPHYNHFLVNLPQLLGPALVAMVLQAYNRGFIASWFKNLRAASALSATAMLSIFPHQEPRFLIPCVPLLLSCLQVRKSRIFLGAWVIFNATLGFLMGVYHQGGVVSTQLAVPSVISTTTSLWHESLKGTQSLFATVVWWKTYSPPLWLLGDNSTLNLNIDTRDLMGKPGSEMVKELERLVPTCGSKQKSTELTSSLEQPDAVFVVAPKSVTFLDQFLAPQSPDSSLELLELWSYKKHISLDDLDFGSDGVLPTMKRVIGRRGLGVWLAQRPGCRAIDS.

The next 7 membrane-spanning stretches (helical) occupy residues Thr5–Pro25, Ser58–Thr78, Gly96–Leu116, Phe141–Ile161, Ile174–Val194, Pro208–Ala228, and Ile348–His368. N-linked (GlcNAc...) asparagine glycosylation is present at Asn420.

It belongs to the glycosyltransferase 22 family. PIGZ subfamily.

It localises to the endoplasmic reticulum membrane. The protein operates within glycolipid biosynthesis; glycosylphosphatidylinositol-anchor biosynthesis. Alpha-1,2-mannosyltransferase involved in glycosylphosphatidylinositol-anchor biosynthesis. Transfers a fourth mannose to trimannosyl-GPIs during GPI precursor assembly. The presence of a fourth mannose in GPI is essential in fungi. This is GPI mannosyltransferase 4 (smp3) from Emericella nidulans (strain FGSC A4 / ATCC 38163 / CBS 112.46 / NRRL 194 / M139) (Aspergillus nidulans).